The following is a 92-amino-acid chain: Small ribosomal subunit protein uS19c (92 aa).

The protein belongs to the universal ribosomal protein uS19 family.

The protein localises to the plastid. It is found in the chloroplast. Its function is as follows. Protein S19 forms a complex with S13 that binds strongly to the 16S ribosomal RNA. The sequence is that of Small ribosomal subunit protein uS19c (rps19) from Anthoceros angustus (Hornwort).